A 373-amino-acid polypeptide reads, in one-letter code: Anhydro-N-acetylmuramic acid kinase (373 aa).

Position 12-19 (12-19 (GTSLDGVD)) interacts with ATP.

This sequence belongs to the anhydro-N-acetylmuramic acid kinase family.

The catalysed reaction is 1,6-anhydro-N-acetyl-beta-muramate + ATP + H2O = N-acetyl-D-muramate 6-phosphate + ADP + H(+). It participates in amino-sugar metabolism; 1,6-anhydro-N-acetylmuramate degradation. The protein operates within cell wall biogenesis; peptidoglycan recycling. Functionally, catalyzes the specific phosphorylation of 1,6-anhydro-N-acetylmuramic acid (anhMurNAc) with the simultaneous cleavage of the 1,6-anhydro ring, generating MurNAc-6-P. Is required for the utilization of anhMurNAc either imported from the medium or derived from its own cell wall murein, and thus plays a role in cell wall recycling. In Serratia proteamaculans (strain 568), this protein is Anhydro-N-acetylmuramic acid kinase.